The chain runs to 192 residues: MSKSTDRINLTNQFLIAMPNMADPTFSGTVVYLCDHSERGALGLVINRPTDIDLQALFSRIDLKLEIEPLLHVPVYFGGPVQTERGFVLHDPKDGNAYTSSMSVPGGLEMTTSKDVLEAVASGTGPERFLLTLGHAGWGAGQLEEEISKNGWLTVEADPKIVFDVPAEERLEAALALLGINLSMLSGEAGHA.

It belongs to the UPF0301 (AlgH) family.

The protein is UPF0301 protein Bphyt_0868 of Paraburkholderia phytofirmans (strain DSM 17436 / LMG 22146 / PsJN) (Burkholderia phytofirmans).